The chain runs to 503 residues: Cobyric acid synthase (503 aa).

In terms of domain architecture, GATase cobBQ-type spans 251–450 (DLDIAVIRLP…IHGIFENAAF (200 aa)). Catalysis depends on C331, which acts as the Nucleophile. Residue H442 is part of the active site.

The protein belongs to the CobB/CobQ family. CobQ subfamily.

It participates in cofactor biosynthesis; adenosylcobalamin biosynthesis. In terms of biological role, catalyzes amidations at positions B, D, E, and G on adenosylcobyrinic A,C-diamide. NH(2) groups are provided by glutamine, and one molecule of ATP is hydrogenolyzed for each amidation. The chain is Cobyric acid synthase from Dehalococcoides mccartyi (strain CBDB1).